The chain runs to 177 residues: Alpha-crystallin A chain (177 aa).

Met-1 carries the post-translational modification N-acetylmethionine. The sHSP domain occupies 52-162; that stretch reads VFRNFLDSGI…NWQDRPIPVS (111 aa). The Zn(2+) site is built by His-100 and Glu-102. A disulfide bridge connects residues Cys-131 and Cys-142. A disordered region spans residues 146–177; it reads TRPGDDSNWQDRPIPVSREEKQGTQPEIRADP. Ser-162 is a glycosylation site (O-linked (GlcNAc) serine). Residues 162-177 are compositionally biased toward basic and acidic residues; that stretch reads SREEKQGTQPEIRADP.

This sequence belongs to the small heat shock protein (HSP20) family. Heteropolymer composed of three CRYAA and one CRYAB subunits. Inter-subunit bridging via zinc ions enhances stability, which is crucial as there is no protein turn over in the lens. Can also form homodimers and homotetramers (dimers of dimers) which serve as the building blocks of homooligomers.

It is found in the cytoplasm. Its subcellular location is the nucleus. In terms of biological role, contributes to the transparency and refractive index of the lens. May act as a chaperone, preventing aggregation of various proteins under a wide range of stress conditions. The protein is Alpha-crystallin A chain (cryaa) of Squalus acanthias (Spiny dogfish).